A 274-amino-acid chain; its full sequence is Nickel/cobalt efflux system RcnA (274 aa).

Topologically, residues methionine 1–asparagine 12 are periplasmic. The chain crosses the membrane as a helical span at residues alanine 13–histidine 33. At serine 34–glycine 56 the chain is on the cytoplasmic side. The chain crosses the membrane as a helical span at residues leucine 57–isoleucine 77. The Periplasmic portion of the chain corresponds to serine 78–alanine 86. The chain crosses the membrane as a helical span at residues glutamate 87–tryptophan 107. Over arginine 108–isoleucine 175 the chain is Cytoplasmic. Residues histidine 127–histidine 153 form a disordered region. Basic residues predominate over residues histidine 129–histidine 144. A helical membrane pass occupies residues leucine 176–isoleucine 196. The Periplasmic segment spans residues cysteine 197 to leucine 209. Residues valine 210–isoleucine 230 form a helical membrane-spanning segment. Topologically, residues serine 231–tyrosine 251 are cytoplasmic. Residues phenylalanine 252–isoleucine 272 traverse the membrane as a helical segment. Residues methionine 273–arginine 274 are Periplasmic-facing.

It belongs to the NiCoT transporter (TC 2.A.52) family. RcnA subfamily.

It localises to the cell inner membrane. Functionally, efflux system for nickel and cobalt. The chain is Nickel/cobalt efflux system RcnA (rcnA) from Escherichia coli (strain K12).